The chain runs to 301 residues: Ribonuclease Z (301 aa).

Residues histidine 60, histidine 62, aspartate 64, histidine 65, histidine 137, aspartate 207, and histidine 265 each contribute to the Zn(2+) site. Aspartate 64 (proton acceptor) is an active-site residue.

It belongs to the RNase Z family. Homodimer. Requires Zn(2+) as cofactor.

It catalyses the reaction Endonucleolytic cleavage of RNA, removing extra 3' nucleotides from tRNA precursor, generating 3' termini of tRNAs. A 3'-hydroxy group is left at the tRNA terminus and a 5'-phosphoryl group is left at the trailer molecule.. In terms of biological role, zinc phosphodiesterase, which displays some tRNA 3'-processing endonuclease activity. Probably involved in tRNA maturation, by removing a 3'-trailer from precursor tRNA. The polypeptide is Ribonuclease Z (Exiguobacterium sp. (strain ATCC BAA-1283 / AT1b)).